We begin with the raw amino-acid sequence, 586 residues long: Phosphomethylpyrimidine synthase (586 aa).

Residues 1-58 (MKQSVSAEQIELKSSLPGSKKVYVDGPREGMKVPMREIEQSDTNGVPNPPIRVYDTSG) are disordered. Residues 22–39 (VYVDGPREGMKVPMREIE) show a composition bias toward basic and acidic residues. Residues asparagine 193, methionine 222, tyrosine 251, histidine 287, 307-309 (SRG), 348-351 (DGLR), and glutamate 387 contribute to the substrate site. Histidine 391 is a binding site for Zn(2+). Tyrosine 414 serves as a coordination point for substrate. Histidine 455 provides a ligand contact to Zn(2+). Cysteine 535, cysteine 538, and cysteine 543 together coordinate [4Fe-4S] cluster.

This sequence belongs to the ThiC family. [4Fe-4S] cluster is required as a cofactor.

The catalysed reaction is 5-amino-1-(5-phospho-beta-D-ribosyl)imidazole + S-adenosyl-L-methionine = 4-amino-2-methyl-5-(phosphooxymethyl)pyrimidine + CO + 5'-deoxyadenosine + formate + L-methionine + 3 H(+). The protein operates within cofactor biosynthesis; thiamine diphosphate biosynthesis. Its function is as follows. Catalyzes the synthesis of the hydroxymethylpyrimidine phosphate (HMP-P) moiety of thiamine from aminoimidazole ribotide (AIR) in a radical S-adenosyl-L-methionine (SAM)-dependent reaction. This is Phosphomethylpyrimidine synthase from Bacillus anthracis (strain A0248).